Consider the following 167-residue polypeptide: Large ribosomal subunit protein uL10 (167 aa).

This sequence belongs to the universal ribosomal protein uL10 family. Part of the ribosomal stalk of the 50S ribosomal subunit. The N-terminus interacts with L11 and the large rRNA to form the base of the stalk. The C-terminus forms an elongated spine to which L12 dimers bind in a sequential fashion forming a multimeric L10(L12)X complex.

Its function is as follows. Forms part of the ribosomal stalk, playing a central role in the interaction of the ribosome with GTP-bound translation factors. This chain is Large ribosomal subunit protein uL10, found in Dichelobacter nodosus (strain VCS1703A).